A 650-amino-acid chain; its full sequence is Pentatricopeptide repeat-containing protein At1g51965, mitochondrial (650 aa).

The N-terminal 23 residues, 1–23, are a transit peptide targeting the mitochondrion; sequence MKLLRRRFFNSVNTITRPNRRHY. 14 PPR repeats span residues 132–169, 170–200, 202–236, 237–267, 269–303, 304–338, 339–369, 371–405, 406–440, 441–475, 476–510, 511–545, 546–580, and 581–615; these read DPFLYNRIILILSRSNLPDRFDRVRSILDSMVKSNVHG, NISTVNILIGFFGNTEDLQMCLRLVKKWDLK, NSFTYKCLLQAYLRSRDYSKAFDVYCEIRRGGHKL, DIFAYNMLLDALAKDEKACQVFEDMKKRHCR, DEYTYTIMIRTMGRIGKCDEAVGLFNEMITEGLTL, NVVGYNTLMQVLAKGKMVDKAIQVFSRMVETGCRP, NEYTYSLLLNLLVAEGQLVRLDGVVEISKRY, TQGIYSYLVRTLSKLGHVSEAHRLFCDMWSFPVKG, ERDSYMSMLESLCGAGKTIEAIEMLSKIHEKGVVT, DTMMYNTVFSALGKLKQISHIHDLFEKMKKDGPSP, DIFTYNILIASFGRVGEVDEAINIFEELERSDCKP, DIISYNSLINCLGKNGDVDEAHVRFKEMQEKGLNP, DVVTYSTLMECFGKTERVEMAYSLFEEMLVKGCQP, and NIVTYNILLDCLEKNGRTAEAVDLYSKMKQQGLTP.

It belongs to the PPR family. P subfamily.

It is found in the mitochondrion. The polypeptide is Pentatricopeptide repeat-containing protein At1g51965, mitochondrial (Arabidopsis thaliana (Mouse-ear cress)).